Consider the following 939-residue polypeptide: Phosphoenolpyruvate carboxylase (939 aa).

Catalysis depends on residues H151 and K593.

The protein belongs to the PEPCase type 1 family. Requires Mg(2+) as cofactor.

It catalyses the reaction oxaloacetate + phosphate = phosphoenolpyruvate + hydrogencarbonate. Forms oxaloacetate, a four-carbon dicarboxylic acid source for the tricarboxylic acid cycle. This is Phosphoenolpyruvate carboxylase from Gloeobacter violaceus (strain ATCC 29082 / PCC 7421).